The sequence spans 352 residues: Serine/threonine-protein phosphatase 2A activator 2 (352 aa).

The protein belongs to the PTPA-type PPIase family.

The protein resides in the cytoplasm. It carries out the reaction [protein]-peptidylproline (omega=180) = [protein]-peptidylproline (omega=0). Its function is as follows. PPIases accelerate the folding of proteins. It catalyzes the cis-trans isomerization of proline imidic peptide bonds in oligopeptides. Acts as a regulatory subunit for PP2A-like phosphatases modulating their activity or substrate specificity, probably by inducing a conformational change in the catalytic subunit, a direct target of the PPIase. Can reactivate inactive phosphatase PP2A-phosphatase methylesterase complexes (PP2Ai) in presence of ATP and Mg(2+) by dissociating the inactive form from the complex. The sequence is that of Serine/threonine-protein phosphatase 2A activator 2 (rrd2) from Schizosaccharomyces pombe (strain 972 / ATCC 24843) (Fission yeast).